A 555-amino-acid chain; its full sequence is Dimethylaniline monooxygenase [N-oxide-forming] 4 (555 aa).

FAD-binding positions include 9–13 (GAGVS), Glu32, and 40–41 (LW). Residues 60-61 (TN) and 195-198 (SGGD) contribute to the NADP(+) site. Residues 515 to 532 (YLKVWGAPLLLASVLLIC) traverse the membrane as a helical segment.

This sequence belongs to the FMO family. Requires FAD as cofactor. Kidney and liver.

The protein resides in the microsome membrane. It is found in the endoplasmic reticulum membrane. It carries out the reaction N,N-dimethylaniline + NADPH + O2 + H(+) = N,N-dimethylaniline N-oxide + NADP(+) + H2O. This protein is involved in the oxidative metabolism of a variety of xenobiotics such as drugs and pesticides. This is Dimethylaniline monooxygenase [N-oxide-forming] 4 (FMO4) from Oryctolagus cuniculus (Rabbit).